Consider the following 264-residue polypeptide: Synaptophysin-like protein 2 (264 aa).

The Cytoplasmic portion of the chain corresponds to 1–33 (MSSTESPSRAADKSPRQQVDRLLEGLRWRRLEE). The 209-residue stretch at 30–238 (RLEEPLGFIK…NCWFVFKETP (209 aa)) folds into the MARVEL domain. A helical transmembrane segment spans residues 34 to 54 (PLGFIKVLQWLFAIFAFGSCG). Residues 55 to 116 (SYSGETGAMV…LMGDFSAPAE (62 aa)) lie on the Vesicular side of the membrane. A helical transmembrane segment spans residues 117-137 (FFVTLGIFSFFYTMAALVVYL). Residues 138 to 150 (RFHKLYTENKRFP) lie on the Cytoplasmic side of the membrane. The chain crosses the membrane as a helical span at residues 151-171 (LVDFCVTVSFTFFWLVAAAAW). Topologically, residues 172 to 213 (GKGLTDVKGATRPSSLTAAMSVCHGEEAVCSAGATPSMGLAN) are vesicular. Asparagine 213 carries an N-linked (GlcNAc...) asparagine glycan. A helical transmembrane segment spans residues 214 to 234 (ISVLFGFINFFLWAGNCWFVF). At 235–264 (KETPWHGQGQDQGQGPSQESAAEQGAVEKQ) the chain is on the cytoplasmic side. Residues 242–264 (QGQDQGQGPSQESAAEQGAVEKQ) are disordered.

Belongs to the synaptophysin/synaptobrevin family. Skeletal muscle.

It localises to the membrane. Involved in communication between the T-tubular and junctional sarcoplasmic reticulum (SR) membranes. This chain is Synaptophysin-like protein 2 (SYPL2), found in Oryctolagus cuniculus (Rabbit).